Here is a 178-residue protein sequence, read N- to C-terminus: Protein GrpE (178 aa).

Residues 1–22 form a disordered region; the sequence is MSENQNPSPSPEEIEAAMSANA.

This sequence belongs to the GrpE family. Homodimer.

Its subcellular location is the cytoplasm. Functionally, participates actively in the response to hyperosmotic and heat shock by preventing the aggregation of stress-denatured proteins, in association with DnaK and GrpE. It is the nucleotide exchange factor for DnaK and may function as a thermosensor. Unfolded proteins bind initially to DnaJ; upon interaction with the DnaJ-bound protein, DnaK hydrolyzes its bound ATP, resulting in the formation of a stable complex. GrpE releases ADP from DnaK; ATP binding to DnaK triggers the release of the substrate protein, thus completing the reaction cycle. Several rounds of ATP-dependent interactions between DnaJ, DnaK and GrpE are required for fully efficient folding. The protein is Protein GrpE of Acidovorax ebreus (strain TPSY) (Diaphorobacter sp. (strain TPSY)).